We begin with the raw amino-acid sequence, 527 residues long: Probable pectinesterase/pectinesterase inhibitor 32 (527 aa).

The signal sequence occupies residues 1-24; sequence MAKFRQMGSSIFFLFLIIISLCSA. The tract at residues 25-165 is pectinesterase inhibitor 32; that stretch reads HKEAFSSTDL…GTTVRNLLTM (141 aa). N-linked (GlcNAc...) asparagine glycans are attached at residues asparagine 110, asparagine 209, asparagine 224, and asparagine 280. The pectinesterase 32 stretch occupies residues 214 to 511; sequence DAVVAADGTG…FTVSQLIQGN (298 aa). Residues threonine 289 and glutamine 319 each contribute to the substrate site. The Proton donor; for pectinesterase activity role is filled by aspartate 342. Cysteine 356 and cysteine 376 form a disulfide bridge. Aspartate 363 serves as the catalytic Nucleophile; for pectinesterase activity. Asparagine 423 is a glycosylation site (N-linked (GlcNAc...) asparagine). Arginine 431 and tryptophan 433 together coordinate substrate. N-linked (GlcNAc...) asparagine glycans are attached at residues asparagine 494 and asparagine 501.

In the N-terminal section; belongs to the PMEI family. It in the C-terminal section; belongs to the pectinesterase family. Expressed in siliques.

It localises to the secreted. The protein localises to the cell wall. The catalysed reaction is [(1-&gt;4)-alpha-D-galacturonosyl methyl ester](n) + n H2O = [(1-&gt;4)-alpha-D-galacturonosyl](n) + n methanol + n H(+). Its pathway is glycan metabolism; pectin degradation; 2-dehydro-3-deoxy-D-gluconate from pectin: step 1/5. Functionally, acts in the modification of cell walls via demethylesterification of cell wall pectin. The polypeptide is Probable pectinesterase/pectinesterase inhibitor 32 (PME32) (Arabidopsis thaliana (Mouse-ear cress)).